The chain runs to 248 residues: tRNA uridine(34) hydroxylase (248 aa).

The Rhodanese domain maps to 127 to 221 (RGRPLVLLDT…YFEEVGGEGY (95 aa)). C181 (cysteine persulfide intermediate) is an active-site residue.

This sequence belongs to the TrhO family.

It catalyses the reaction uridine(34) in tRNA + AH2 + O2 = 5-hydroxyuridine(34) in tRNA + A + H2O. Catalyzes oxygen-dependent 5-hydroxyuridine (ho5U) modification at position 34 in tRNAs. This is tRNA uridine(34) hydroxylase from Xanthomonas euvesicatoria pv. vesicatoria (strain 85-10) (Xanthomonas campestris pv. vesicatoria).